A 476-amino-acid polypeptide reads, in one-letter code: Lactate utilization protein B (476 aa).

4Fe-4S ferredoxin-type domains are found at residues 304-334 (GTEFQPVLQCIRCAACVNVCPVYRHIGGHSY) and 353-382 (YDDYKELPYASSLCAACTEACPVKIPLHEL). [4Fe-4S] cluster is bound by residues Cys313, Cys316, Cys319, Cys323, Cys366, Cys369, and Cys373. A disordered region spans residues 440–476 (KGPGPLKAWTESREFPAPSKERFRDWFQTRQKGGNPS). Residues 449–466 (TESREFPAPSKERFRDWF) show a composition bias toward basic and acidic residues. Positions 467–476 (QTRQKGGNPS) are enriched in polar residues.

It belongs to the LutB/YkgF family.

In terms of biological role, is involved in L-lactate degradation and allows cells to grow with lactate as the sole carbon source. Has probably a role as an electron transporter during oxidation of L-lactate. The protein is Lactate utilization protein B of Geobacillus kaustophilus (strain HTA426).